The following is a 254-amino-acid chain: Sec-independent protein translocase protein TatC (254 aa).

6 helical membrane-spanning segments follow: residues Ile-40–Pro-60, Phe-82–Tyr-104, Val-125–Ile-145, Phe-172–Val-192, Phe-210–Thr-230, and Leu-233–Gly-253.

Belongs to the TatC family. In terms of assembly, forms a complex with TatA.

The protein resides in the cell inner membrane. Functionally, part of the twin-arginine translocation (Tat) system that transports large folded proteins containing a characteristic twin-arginine motif in their signal peptide across membranes. This chain is Sec-independent protein translocase protein TatC, found in Synechocystis sp. (strain ATCC 27184 / PCC 6803 / Kazusa).